Reading from the N-terminus, the 804-residue chain is MKFTLSWLKDHLETDATLDEIVEKLTDIGLEVESVDDRAAFRAFTIARVLTATRHPDADKLQVLSVDTGDGKPVQVVCGAPNARAGLVGVLGRPGDYVPGLDVTLSVGKIRGVESFGMMCSERELDFSDEHNGIIDLAENAPVGTSFAAYMGFNDPIIEIGLTPNRADCTGIRGIARDLAAAGLGTLKNTLPDAVKGEGETPVKVILDQDAGNPFCTGFALRMVKGVKNGPSPKWMQQRLKAIGLRPINALVDITNYVTFDQGRPLHVFDAAKVKGNLTVRTARDGETILALDQREYKLNAGMYVIADENGPESIAGIMGGEHSGCDENTVDVLIESALWDPRMIARTGRELGIVTDARYRFERGVDPEMMVPGAEIATKLVLELCGGQPTVLDVVGYKPHTARVIDFPVTEVKRLTGLDVSYEDAFDILKRLGFGVEGDGKTIRATVPSWRGDVEGKADLVEEVMRIHGINRIDPQPLPSHGAVNGRILTTLQIRTRHARRMLASRGMMEAVTYSFISEAQAKAFGGGKPELKLANPIAADMSDMRPSLLPGLLAAAQRNADRGFDDIALFEVSGIYEGDTPDKQRRVAGGVRRGTAKVEGAGRFWAGNAAPVGVFDAKADALAALEAAGAPVDRIQIEAGGPEWLHPGRSGTLKLGPKVVLGTFGEFHPDTLEALDVSGALCGFEVYLDAIPEPKAKSARTKPALSLSLFQSLKRDYAFVVDAAVEAGNVVKAVSSADKKLIVGVQVFDIFTGASLGEGKKSIAVEVLLQPQDRTLTDEDLEVLSKQIVASVAKQTGGVLRG.

Residues 38-148 (RAAFRAFTIA…ENAPVGTSFA (111 aa)) form the tRNA-binding domain. The B5 domain maps to 401 to 476 (HTARVIDFPV…RIHGINRIDP (76 aa)). Positions 454, 460, 463, and 464 each coordinate Mg(2+). The region spanning 710-803 (SLFQSLKRDY…VAKQTGGVLR (94 aa)) is the FDX-ACB domain.

Belongs to the phenylalanyl-tRNA synthetase beta subunit family. Type 1 subfamily. In terms of assembly, tetramer of two alpha and two beta subunits. The cofactor is Mg(2+).

The protein localises to the cytoplasm. The enzyme catalyses tRNA(Phe) + L-phenylalanine + ATP = L-phenylalanyl-tRNA(Phe) + AMP + diphosphate + H(+). The polypeptide is Phenylalanine--tRNA ligase beta subunit (Brucella melitensis biotype 1 (strain ATCC 23456 / CCUG 17765 / NCTC 10094 / 16M)).